Reading from the N-terminus, the 251-residue chain is Ubiquinone/menaquinone biosynthesis C-methyltransferase UbiE (251 aa).

Residues Thr-74, Asp-95, 123–124 (NA), and Ser-140 each bind S-adenosyl-L-methionine.

Belongs to the class I-like SAM-binding methyltransferase superfamily. MenG/UbiE family.

It catalyses the reaction a 2-demethylmenaquinol + S-adenosyl-L-methionine = a menaquinol + S-adenosyl-L-homocysteine + H(+). It carries out the reaction a 2-methoxy-6-(all-trans-polyprenyl)benzene-1,4-diol + S-adenosyl-L-methionine = a 5-methoxy-2-methyl-3-(all-trans-polyprenyl)benzene-1,4-diol + S-adenosyl-L-homocysteine + H(+). Its pathway is quinol/quinone metabolism; menaquinone biosynthesis; menaquinol from 1,4-dihydroxy-2-naphthoate: step 2/2. The protein operates within cofactor biosynthesis; ubiquinone biosynthesis. In terms of biological role, methyltransferase required for the conversion of demethylmenaquinol (DMKH2) to menaquinol (MKH2) and the conversion of 2-polyprenyl-6-methoxy-1,4-benzoquinol (DDMQH2) to 2-polyprenyl-3-methyl-6-methoxy-1,4-benzoquinol (DMQH2). The protein is Ubiquinone/menaquinone biosynthesis C-methyltransferase UbiE of Photorhabdus laumondii subsp. laumondii (strain DSM 15139 / CIP 105565 / TT01) (Photorhabdus luminescens subsp. laumondii).